The following is a 204-amino-acid chain: Ubiquitin-conjugating enzyme E2 T (204 aa).

Positions 2–152 constitute a UBC core domain; the sequence is QRASRLKKEL…AKQWTEAHAR (151 aa). Cys86 serves as the catalytic Glycyl thioester intermediate. Residues Lys91 and Lys181 each participate in a glycyl lysine isopeptide (Lys-Gly) (interchain with G-Cter in ubiquitin) cross-link. Residues 150–204 form a disordered region; sequence HARQKQKADEEELGTSSEVGDSEESHSTQKRKARPLGGMEKKFSPDVQRVYPGPS. Residues Lys190 and Lys191 each participate in a glycyl lysine isopeptide (Lys-Gly) (interchain with G-Cter in SUMO2) cross-link. At Ser193 the chain carries Phosphoserine.

This sequence belongs to the ubiquitin-conjugating enzyme family. In terms of assembly, interacts with FANCL and BRCA1. Post-translationally, auto-ubiquitinated. Effects of auto-monoubiquitination at Lys-91 and Lys-181 are unclear.

Its subcellular location is the nucleus. The enzyme catalyses S-ubiquitinyl-[E1 ubiquitin-activating enzyme]-L-cysteine + [E2 ubiquitin-conjugating enzyme]-L-cysteine = [E1 ubiquitin-activating enzyme]-L-cysteine + S-ubiquitinyl-[E2 ubiquitin-conjugating enzyme]-L-cysteine.. It participates in protein modification; protein ubiquitination. Functionally, accepts ubiquitin from the E1 complex and catalyzes its covalent attachment to other proteins. Catalyzes monoubiquitination. Involved in mitomycin-C (MMC)-induced DNA repair: acts as a specific E2 ubiquitin-conjugating enzyme for the Fanconi anemia complex by associating with E3 ubiquitin-protein ligase FANCL and catalyzing monoubiquitination of FANCD2, a key step in the DNA damage pathway. Also mediates monoubiquitination of FANCL and FANCI. May contribute to ubiquitination and degradation of BRCA1. In vitro able to promote polyubiquitination using all 7 ubiquitin Lys residues, but may prefer 'Lys-11'-, 'Lys-27'-, 'Lys-48'- and 'Lys-63'-linked polyubiquitination. The polypeptide is Ubiquitin-conjugating enzyme E2 T (Ube2t) (Mus musculus (Mouse)).